A 238-amino-acid polypeptide reads, in one-letter code: Ribonuclease PH (238 aa).

Phosphate is bound by residues Arg-86 and 124–126 (GTR).

Belongs to the RNase PH family. In terms of assembly, homohexameric ring arranged as a trimer of dimers.

It carries out the reaction tRNA(n+1) + phosphate = tRNA(n) + a ribonucleoside 5'-diphosphate. Functionally, phosphorolytic 3'-5' exoribonuclease that plays an important role in tRNA 3'-end maturation. Removes nucleotide residues following the 3'-CCA terminus of tRNAs; can also add nucleotides to the ends of RNA molecules by using nucleoside diphosphates as substrates, but this may not be physiologically important. Probably plays a role in initiation of 16S rRNA degradation (leading to ribosome degradation) during starvation. This Psychrobacter cryohalolentis (strain ATCC BAA-1226 / DSM 17306 / VKM B-2378 / K5) protein is Ribonuclease PH.